Here is a 326-residue protein sequence, read N- to C-terminus: Acetyl-coenzyme A carboxylase carboxyl transferase subunit beta (326 aa).

The 270-residue stretch at 29 to 298 folds into the CoA carboxyltransferase N-terminal domain; sequence LWIKCEACGT…TLISDESLET (270 aa). Zn(2+) is bound by residues cysteine 33, cysteine 36, cysteine 52, and cysteine 55. The segment at 33-55 adopts a C4-type zinc-finger fold; that stretch reads CEACGTLTYTKDLQANQMVCPEC. Positions 302 to 326 are disordered; sequence CHLPFQAESHNLSTTDNKIQPTPQG. Residues 309-326 are compositionally biased toward polar residues; sequence ESHNLSTTDNKIQPTPQG.

Belongs to the AccD/PCCB family. As to quaternary structure, acetyl-CoA carboxylase is a heterohexamer composed of biotin carboxyl carrier protein (AccB), biotin carboxylase (AccC) and two subunits each of ACCase subunit alpha (AccA) and ACCase subunit beta (AccD). Zn(2+) is required as a cofactor.

It is found in the cytoplasm. It catalyses the reaction N(6)-carboxybiotinyl-L-lysyl-[protein] + acetyl-CoA = N(6)-biotinyl-L-lysyl-[protein] + malonyl-CoA. It functions in the pathway lipid metabolism; malonyl-CoA biosynthesis; malonyl-CoA from acetyl-CoA: step 1/1. Component of the acetyl coenzyme A carboxylase (ACC) complex. Biotin carboxylase (BC) catalyzes the carboxylation of biotin on its carrier protein (BCCP) and then the CO(2) group is transferred by the transcarboxylase to acetyl-CoA to form malonyl-CoA. This is Acetyl-coenzyme A carboxylase carboxyl transferase subunit beta from Trichodesmium erythraeum (strain IMS101).